A 192-amino-acid polypeptide reads, in one-letter code: Xanthine phosphoribosyltransferase (192 aa).

Residues L20 and N27 each contribute to the xanthine site. 128–132 serves as a coordination point for 5-phospho-alpha-D-ribose 1-diphosphate; it reads ADGEA. Position 156 (K156) interacts with xanthine.

Belongs to the purine/pyrimidine phosphoribosyltransferase family. Xpt subfamily. Homodimer.

It is found in the cytoplasm. It catalyses the reaction XMP + diphosphate = xanthine + 5-phospho-alpha-D-ribose 1-diphosphate. The protein operates within purine metabolism; XMP biosynthesis via salvage pathway; XMP from xanthine: step 1/1. Its function is as follows. Converts the preformed base xanthine, a product of nucleic acid breakdown, to xanthosine 5'-monophosphate (XMP), so it can be reused for RNA or DNA synthesis. This Agathobacter rectalis (strain ATCC 33656 / DSM 3377 / JCM 17463 / KCTC 5835 / VPI 0990) (Eubacterium rectale) protein is Xanthine phosphoribosyltransferase.